The sequence spans 131 residues: MQITDAIADMLTRIRNAGSAKHESVDIPASNLKRSIANILLEEGYIKNFEEISDGKQGVLRVNLKYNNKQNVITGIKRISKPGLRVYAGKDQLPKVLGGLGIAVISTSKGIMTDKKARVEGIGGEVLAFVW.

The protein belongs to the universal ribosomal protein uS8 family. Part of the 30S ribosomal subunit. Contacts proteins S5 and S12.

In terms of biological role, one of the primary rRNA binding proteins, it binds directly to 16S rRNA central domain where it helps coordinate assembly of the platform of the 30S subunit. The sequence is that of Small ribosomal subunit protein uS8 from Ruminiclostridium cellulolyticum (strain ATCC 35319 / DSM 5812 / JCM 6584 / H10) (Clostridium cellulolyticum).